The primary structure comprises 544 residues: Baeyer-Villiger monooxygenase (544 aa).

Positions 27, 47, 56, 67, 73, and 119 each coordinate FAD.

The protein belongs to the FAD-binding monooxygenase family. FAD is required as a cofactor.

Catalyzes a Baeyer-Villiger oxidation reaction, i.e. the insertion of an oxygen atom into a carbon-carbon bond adjacent to a carbonyl, which converts ketones to esters or lactones using NADPH as an electron donor. Besides cycloalkanones, can use cyclic alpha,beta-unsaturated ketones as substrates, leading to enol-lactones. Can also act on methylated cycloalkanones and methylated cycloalkenones with high enantioselectivity in some cases. This is Baeyer-Villiger monooxygenase from Parvibaculum lavamentivorans (strain DS-1 / DSM 13023 / NCIMB 13966).